The sequence spans 288 residues: 4-diphosphocytidyl-2-C-methyl-D-erythritol kinase (288 aa).

Lys10 is an active-site residue. ATP is bound at residue 99–109 (PMGGGLGGGSS). Residue Asp141 is part of the active site.

The protein belongs to the GHMP kinase family. IspE subfamily. Homodimer.

The enzyme catalyses 4-CDP-2-C-methyl-D-erythritol + ATP = 4-CDP-2-C-methyl-D-erythritol 2-phosphate + ADP + H(+). It participates in isoprenoid biosynthesis; isopentenyl diphosphate biosynthesis via DXP pathway; isopentenyl diphosphate from 1-deoxy-D-xylulose 5-phosphate: step 3/6. Catalyzes the phosphorylation of the position 2 hydroxy group of 4-diphosphocytidyl-2C-methyl-D-erythritol. This chain is 4-diphosphocytidyl-2-C-methyl-D-erythritol kinase, found in Serratia proteamaculans (strain 568).